A 1268-amino-acid chain; its full sequence is Meiosis inhibitor protein 1 (1268 aa).

Strongly expressed in testis, weakly in brain, and not detected in spleen, liver, kidney, small intestine or colon.

Required for normal meiotic chromosome synapsis. May be involved in the formation of meiotic double-strand breaks (DSBs) in spermatocytes. The chain is Meiosis inhibitor protein 1 from Mus musculus (Mouse).